We begin with the raw amino-acid sequence, 217 residues long: Uracil-DNA glycosylase (217 aa).

Residue Asp62 is the Proton acceptor of the active site.

The protein belongs to the uracil-DNA glycosylase (UDG) superfamily. UNG family.

The protein localises to the cytoplasm. It catalyses the reaction Hydrolyzes single-stranded DNA or mismatched double-stranded DNA and polynucleotides, releasing free uracil.. In terms of biological role, excises uracil residues from the DNA which can arise as a result of misincorporation of dUMP residues by DNA polymerase or due to deamination of cytosine. This Streptococcus pyogenes serotype M49 (strain NZ131) protein is Uracil-DNA glycosylase.